The sequence spans 399 residues: 3-methyl-2-oxobutanoate hydroxymethyltransferase 2, mitochondrial (399 aa).

Residues 1–90 constitute a mitochondrion transit peptide; sequence MSFSRLLTPR…ARRVTLATLR (90 aa). The Mg(2+) site is built by Asp125 and Asp164. 3-methyl-2-oxobutanoate is bound by residues 125-126, Asp164, and Lys194; that span reads DS. Glu196 provides a ligand contact to Mg(2+). The active-site Proton acceptor is the Glu264.

The protein belongs to the PanB family. Mg(2+) is required as a cofactor.

Its subcellular location is the mitochondrion. It carries out the reaction 3-methyl-2-oxobutanoate + (6R)-5,10-methylene-5,6,7,8-tetrahydrofolate + H2O = 2-dehydropantoate + (6S)-5,6,7,8-tetrahydrofolate. The protein operates within cofactor biosynthesis; (R)-pantothenate biosynthesis; (R)-pantoate from 3-methyl-2-oxobutanoate: step 1/2. Catalyzes the reversible reaction in which hydroxymethyl group from 5,10-methylenetetrahydrofolate is transferred onto alpha-ketoisovalerate to form ketopantoate. The sequence is that of 3-methyl-2-oxobutanoate hydroxymethyltransferase 2, mitochondrial (KPHMT2) from Oryza sativa subsp. japonica (Rice).